Here is a 202-residue protein sequence, read N- to C-terminus: Urease accessory protein UreE (202 aa).

A disordered region spans residues 138 to 202 (RGAYHSHGGH…HGHHHGHKHD (65 aa)). Positions 147 to 193 (HSHDHGHAAHDHGHAAHDHGHNHDHDHGHAHGHDHQHDHNCDHDHDH) are enriched in basic and acidic residues.

Belongs to the UreE family.

It is found in the cytoplasm. In terms of biological role, involved in urease metallocenter assembly. Binds nickel. Probably functions as a nickel donor during metallocenter assembly. This is Urease accessory protein UreE from Rhizobium etli (strain CIAT 652).